We begin with the raw amino-acid sequence, 407 residues long: Divalent metal cation transporter MntH (407 aa).

11 helical membrane passes run 16–36 (LTLL…GNFA), 43–63 (STFG…AMLV), 95–115 (WVQA…GAAV), 119–139 (LLLG…TWGI), 152–172 (FVVG…LVFS), 193–213 (AVYL…IYLH), 239–259 (IAMT…AAAF), 288–308 (LFGL…TLAG), 318–338 (FTIP…VVIA), 346–366 (ILVL…IPLL), and 387–407 (VGRL…VAMI).

The protein belongs to the NRAMP family.

The protein resides in the cell inner membrane. Functionally, h(+)-stimulated, divalent metal cation uptake system. This Aeromonas hydrophila subsp. hydrophila (strain ATCC 7966 / DSM 30187 / BCRC 13018 / CCUG 14551 / JCM 1027 / KCTC 2358 / NCIMB 9240 / NCTC 8049) protein is Divalent metal cation transporter MntH.